Here is a 311-residue protein sequence, read N- to C-terminus: tRNA dimethylallyltransferase (311 aa).

11 to 18 provides a ligand contact to ATP; that stretch reads GPTAVGKT. 13 to 18 provides a ligand contact to substrate; that stretch reads TAVGKT. An interaction with substrate tRNA region spans residues 36–39; it reads DSVQ.

This sequence belongs to the IPP transferase family. As to quaternary structure, monomer. Mg(2+) serves as cofactor.

The catalysed reaction is adenosine(37) in tRNA + dimethylallyl diphosphate = N(6)-dimethylallyladenosine(37) in tRNA + diphosphate. Functionally, catalyzes the transfer of a dimethylallyl group onto the adenine at position 37 in tRNAs that read codons beginning with uridine, leading to the formation of N6-(dimethylallyl)adenosine (i(6)A). In Exiguobacterium sp. (strain ATCC BAA-1283 / AT1b), this protein is tRNA dimethylallyltransferase.